The chain runs to 1369 residues: Phospholipase D1 (1369 aa).

2 disordered regions span residues 27 to 90 (YSEK…SSWH) and 318 to 340 (ESHS…GRKK). The span at 31 to 53 (GTGRKDAEDHTPSKITDLEKNVD) shows a compositional bias: basic and acidic residues. Residues 208–379 (TDLIKVSVLD…NVLYSFLEFS (172 aa)) form the PX domain. PLD phosphodiesterase domains are found at residues 641–668 (LFWA…CFGR) and 941–968 (EMIY…NERS). A compositionally biased stretch (basic and acidic residues) spans 1277–1289 (HETHEKSENDPKN). The segment at 1277 to 1320 (HETHEKSENDPKNPKAGSQGSGNTSASEDSKTEKPKTRTNNGLQ) is disordered. Polar residues predominate over residues 1292 to 1303 (AGSQGSGNTSAS).

It belongs to the phospholipase D family.

Its subcellular location is the cytoplasm. It catalyses the reaction a 1,2-diacyl-sn-glycero-3-phosphocholine + H2O = a 1,2-diacyl-sn-glycero-3-phosphate + choline + H(+). Activity is slightly stimulated by oleate. Required for meiosis and spore formation. Seems to be involved in the coordinate induction of late meiotic events. The polypeptide is Phospholipase D1 (pld1) (Schizosaccharomyces pombe (strain 972 / ATCC 24843) (Fission yeast)).